The sequence spans 1032 residues: Calmodulin-binding transcription activator 3 (1032 aa).

A DNA-binding region (CG-1) is located at residues 15–141 (VGQILSEARH…YLEVKGSRVS (127 aa)). The tract at residues 146-197 (RMQRTEDAARSPQETGDALTSEHDGYASCSFNQNDHSNHSQTTDSASVNGFH) is disordered. Polar residues predominate over residues 174-195 (CSFNQNDHSNHSQTTDSASVNG). The residue at position 272 (serine 272) is a Phosphoserine. 3 ANK repeats span residues 661–690 (GGQG…SVDF), 694–723 (NGWT…APGT), and 733–762 (SGST…RAHV). IQ domains follow at residues 852 to 881 (VQAA…RIIK) and 875 to 904 (TRQR…SVGV). The segment at 900 to 922 (WSVGVLEKVILRWRRKGAGLRGF) is calmodulin-binding. The stretch at 945–987 (KQGRKQTEDRLQKALARVKSMVQYPEARDQYRRLLNVVNDIQE) forms a coiled coil. Serine 964 bears the Phosphoserine mark.

The protein belongs to the CAMTA family. As to quaternary structure, interacts with SR1IP1. Interacts with DSC1. In terms of processing, ubiquinated during pathogen infection. Ubiquitination leads to its subsequent proteasome-dependent degradation, thus allowing the establishment of plant defense response. In terms of tissue distribution, expressed in roots, stems, leaves, carpels, and siliques, but not in stigmas or other parts of the flower.

The protein localises to the nucleus. Functionally, transcription activator that binds to the DNA consensus sequence 5'-[ACG]CGCG[GTC]-3'. Binds calmodulin in a calcium-dependent manner in vitro. Regulates transcriptional activity in response to calcium signals. Involved in freezing tolerance in association with CAMTA1 and CAMTA2. Required for the cold-induced expression of DREB1B/CBF1, DREB1C/CBF2, ZAT12 and GOLS3. Involved in response to cold. Contributes together with CAMTA5 to the positive regulation of the cold-induced expression of DREB1A/CBF3, DREB1B/CBF1 and DREB1C/CBF2. Involved together with CAMTA2 and CAMTA4 in the positive regulation of a general stress response (GSR). Involved in the regulation of GSR amplitude downstream of MEKK1. Involved in the regulation of a set of genes involved in defense responses against pathogens. Involved in the regulation of both basal resistance and systemic acquired resistance (SAR). Acts as negative regulator of plant immunity. Binds to the promoter of the defense-related gene EDS1 and represses its expression. Binds to the promoter of the defense-related gene NDR1 and represses its expression. Involved in defense against insects. Required for tolerance to the generalist herbivore Trichoplusia ni, and contributes to the positive regulation of genes associated with glucosinolate metabolism. Required for tolerance to Bradysia impatiens larvae. Mediates herbivore-induced wound response. Required for wound-induced jasmonate accumulation. Involved in the regulation of ethylene-induced senescence by binding to the promoter of the senescence-inducer gene EIN3 and repressing its expression. The sequence is that of Calmodulin-binding transcription activator 3 from Arabidopsis thaliana (Mouse-ear cress).